The chain runs to 357 residues: Peptide chain release factor 1 (357 aa).

Q234 is modified (N5-methylglutamine). The disordered stretch occupies residues 283–313; sequence SKKQEQRSSNRKQQVGSGDRSERIRTYNFPQ.

This sequence belongs to the prokaryotic/mitochondrial release factor family. Post-translationally, methylated by PrmC. Methylation increases the termination efficiency of RF1.

The protein localises to the cytoplasm. Peptide chain release factor 1 directs the termination of translation in response to the peptide chain termination codons UAG and UAA. In Borrelia garinii subsp. bavariensis (strain ATCC BAA-2496 / DSM 23469 / PBi) (Borreliella bavariensis), this protein is Peptide chain release factor 1.